The following is a 356-amino-acid chain: Phosphoribosylformylglycinamidine cyclo-ligase (356 aa).

Belongs to the AIR synthase family.

The protein localises to the cytoplasm. The catalysed reaction is 2-formamido-N(1)-(5-O-phospho-beta-D-ribosyl)acetamidine + ATP = 5-amino-1-(5-phospho-beta-D-ribosyl)imidazole + ADP + phosphate + H(+). It functions in the pathway purine metabolism; IMP biosynthesis via de novo pathway; 5-amino-1-(5-phospho-D-ribosyl)imidazole from N(2)-formyl-N(1)-(5-phospho-D-ribosyl)glycinamide: step 2/2. The polypeptide is Phosphoribosylformylglycinamidine cyclo-ligase (Sinorhizobium medicae (strain WSM419) (Ensifer medicae)).